Consider the following 321-residue polypeptide: tRNA(Ile)-lysidine synthase (321 aa).

30–35 (SGGSDS) contributes to the ATP binding site.

It belongs to the tRNA(Ile)-lysidine synthase family.

The protein resides in the cytoplasm. The enzyme catalyses cytidine(34) in tRNA(Ile2) + L-lysine + ATP = lysidine(34) in tRNA(Ile2) + AMP + diphosphate + H(+). Its function is as follows. Ligates lysine onto the cytidine present at position 34 of the AUA codon-specific tRNA(Ile) that contains the anticodon CAU, in an ATP-dependent manner. Cytidine is converted to lysidine, thus changing the amino acid specificity of the tRNA from methionine to isoleucine. This Chlamydia trachomatis serovar D (strain ATCC VR-885 / DSM 19411 / UW-3/Cx) protein is tRNA(Ile)-lysidine synthase.